Here is a 3419-residue protein sequence, read N- to C-terminus: Utrophin (3419 aa).

Residues Met1–Tyr246 form an actin-binding region. Tyr4 is subject to Phosphotyrosine. At Ser10 the chain carries Phosphoserine. 2 consecutive Calponin-homology (CH) domains span residues Asp31–Gln135 and Thr150–Pro255. Positions Thr268–Lys905 are interaction with SYNM. At Ser295 the chain carries Phosphoserine. Spectrin repeat units follow at residues Asp312–His416, Glu421–Gln525, Gln532–Thr636, Lys690–Gln795, Asn801–Glu901, Pro910–Glu1012, Arg1019–Ser1121, Met1128–Glu1229, Val1236–Glu1333, Gln1335–Lys1436, Ala1438–Glu1540, Arg1547–Leu1648, Gln1653–Ala1747, Gln1748–Ala1840, Ile1841–Arg1958, Lys1969–Lys2070, and Ser2077–Thr2176. The tract at residues Leu1336 to Ala1761 is interaction with SYNM. Phosphoserine is present on Ser1998. Position 2201 is a phosphoserine (Ser2201). Spectrin repeat units lie at residues Ala2216–Glu2319, Glu2336–Glu2426, Gln2433–Glu2542, Asn2549–Gly2674, and Arg2681–Gln2783. The tract at residues Asp2616–Arg2640 is disordered. Residues Ala2785–Thr3152 form an interaction with SYNM region. In terms of domain architecture, WW spans Thr2799–Met2832. Residues Lys3052–Thr3108 form a ZZ-type; degenerate zinc finger. Positions 3057, 3060, 3081, and 3084 each coordinate Zn(2+). 2 disordered regions span residues Arg3277–Ser3296 and Asp3344–Thr3395. Ser3284 carries the post-translational modification Phosphoserine.

As to quaternary structure, homodimer. Interacts with the syntrophins SNTA1; SNTB1 and SNTB2. Interacts with SYNM. Interacts (via its WWW and ZZ domains) with DAG1 (via the PPXY motif of betaDAG1); the interaction is inhibited by the tyrosine phosphorylation of the PPXY motif of DAG1. Interacts with DTNB. Interacts with PGM5.

The protein resides in the postsynaptic cell membrane. It is found in the cytoplasm. It localises to the cytoskeleton. Its function is as follows. May play a role in anchoring the cytoskeleton to the plasma membrane. This Rattus norvegicus (Rat) protein is Utrophin.